The primary structure comprises 178 residues: Nucleoplasmin-3 (178 aa).

Alanine 2 carries the N-acetylalanine modification. Serine 13 and serine 16 each carry phosphoserine. Arginine 27 is subject to Omega-N-methylarginine. The segment at threonine 141–proline 178 is disordered. Acidic residues predominate over residues valine 146–glutamate 164. Serine 147, serine 151, and serine 158 each carry phosphoserine.

The protein belongs to the nucleoplasmin family. In terms of assembly, interacts with NPM (via N-terminus). Forms a pentamer with NPM at a ratio 4:1 (NPM3/NPM). Two pentamers form a decamer. In terms of processing, phosphorylated. In terms of tissue distribution, ubiquitous.

Its subcellular location is the nucleus. The protein localises to the nucleolus. Functionally, plays a role in the regulation of diverse cellular processes such as ribosome biogenesis, chromatin remodeling or protein chaperoning. Modulates the histone chaperone function and the RNA-binding activity of nucleolar phosphoprotein B23/NPM. Efficiently mediates chromatin remodeling when included in a pentamer containing NPM3 and NPM. The polypeptide is Nucleoplasmin-3 (NPM3) (Homo sapiens (Human)).